Reading from the N-terminus, the 382-residue chain is Galactokinase (382 aa).

34-37 (EHTD) is a substrate binding site. 124-130 (GAGLSSS) lines the ATP pocket. Mg(2+) contacts are provided by Ser-130 and Glu-162. The active-site Proton acceptor is Asp-174. Tyr-223 lines the substrate pocket.

The protein belongs to the GHMP kinase family. GalK subfamily.

It is found in the cytoplasm. It catalyses the reaction alpha-D-galactose + ATP = alpha-D-galactose 1-phosphate + ADP + H(+). It functions in the pathway carbohydrate metabolism; galactose metabolism. In terms of biological role, catalyzes the transfer of the gamma-phosphate of ATP to D-galactose to form alpha-D-galactose-1-phosphate (Gal-1-P). The chain is Galactokinase from Salmonella arizonae (strain ATCC BAA-731 / CDC346-86 / RSK2980).